Here is a 108-residue protein sequence, read N- to C-terminus: Large ribosomal subunit protein P1 (108 aa).

Residues 67–108 (PAAAPAEAGGEEKKEEEKKEEEEKEEEVSEEEALAGLSALFG) form a disordered region. The span at 84–99 (KKEEEEKEEEVSEEEA) shows a compositional bias: acidic residues.

This sequence belongs to the eukaryotic ribosomal protein P1/P2 family. Part of the 50S ribosomal subunit. Homodimer, it forms part of the ribosomal stalk which helps the ribosome interact with GTP-bound translation factors. Forms a heptameric uL10/P0(P1)2(P1)2(P1)2 complex, where uL10/P0 forms an elongated spine to which the P1 dimers bind in a sequential fashion.

Its function is as follows. Forms part of the ribosomal stalk, playing a central role in the interaction of the ribosome with GTP-bound translation factors. The stalk complex of P.horikoshii binds to E.coli large subunits and confers on them the ability to interact with eukaryotic elongation factors. Each succesive P1 dimer bound along the P0 spine increases the GTPase activity of elongation factors and increases translation by reconsituted ribosomes. The protein is Large ribosomal subunit protein P1 of Pyrococcus horikoshii (strain ATCC 700860 / DSM 12428 / JCM 9974 / NBRC 100139 / OT-3).